The primary structure comprises 152 residues: Prostaglandin E synthase (152 aa).

At 1–12 (MPAHSLAMSSPA) the chain is on the lumenal side. The helical transmembrane segment at 13–41 (LPAFLLCSTLLVIKMYVVAIITGQVRLRK) threads the bilayer. Residue Arg-38 coordinates glutathione. The Cytoplasmic segment spans residues 42-60 (KAFANPEDALRHGGPQYCR). A helical transmembrane segment spans residues 61 to 90 (SDPDVERCLRAHRNDMETIYPFLFLGFVYS). A glutathione-binding site is contributed by 73 to 77 (RNDME). The Lumenal segment spans residues 91–95 (FLGPN). A helical membrane pass occupies residues 96-119 (PFVAWMHFLVFLLGRVVHTVAYLG). Residues His-113 and Tyr-117 each coordinate glutathione. The Cytoplasmic segment spans residues 120–123 (KLRA). Residues 124–152 (PIRSVTYTLAQLPCASMALQILWEAARHL) traverse the membrane as a helical segment. Position 126–130 (126–130 (RSVTY)) interacts with glutathione.

Belongs to the MAPEG family. Homotrimer. Glutathione serves as cofactor.

The protein resides in the membrane. It is found in the cytoplasm. It localises to the perinuclear region. It catalyses the reaction prostaglandin H2 = prostaglandin E2. It carries out the reaction 2-glyceryl-prostaglandin H2 = 2-glyceryl-prostaglandin E2. The catalysed reaction is prostaglandin G2 = (15S)-15-hydroperoxy-prostaglandin E2. The enzyme catalyses 1-chloro-2,4-dinitrobenzene + glutathione = 2,4-dinitrophenyl-S-glutathione + chloride + H(+). It catalyses the reaction (5S)-hydroperoxy-(6E,8Z,11Z,14Z)-eicosatetraenoate + 2 glutathione = (5S)-hydroxy-(6E,8Z,11Z,14Z)-eicosatetraenoate + glutathione disulfide + H2O. It participates in lipid metabolism; prostaglandin biosynthesis. Terminal enzyme of the cyclooxygenase (COX)-2-mediated prostaglandin E2 (PGE2) biosynthetic pathway. Catalyzes the glutathione-dependent oxidoreduction of prostaglandin endoperoxide H2 (PGH2) to prostaglandin E2 (PGE2) in response to inflammatory stimuli. Plays a key role in inflammation response, fever and pain. Also catalyzes the oxidoreduction of endocannabinoids into prostaglandin glycerol esters and PGG2 into 15-hydroperoxy-PGE2. In addition, displays low glutathione transferase and glutathione-dependent peroxidase activities, toward 1-chloro-2,4-dinitrobenzene and 5-hydroperoxyicosatetraenoic acid (5-HPETE), respectively. This Macaca fascicularis (Crab-eating macaque) protein is Prostaglandin E synthase (PTGES).